We begin with the raw amino-acid sequence, 387 residues long: Phosphoglycerate kinase (387 aa).

Residues 21–23, arginine 36, 59–62, arginine 113, and arginine 146 each bind substrate; these read DLN and HLGR. ATP contacts are provided by residues lysine 197, glutamate 314, and 340–343; that span reads GGDT.

It belongs to the phosphoglycerate kinase family. In terms of assembly, monomer.

Its subcellular location is the cytoplasm. It catalyses the reaction (2R)-3-phosphoglycerate + ATP = (2R)-3-phospho-glyceroyl phosphate + ADP. It participates in carbohydrate degradation; glycolysis; pyruvate from D-glyceraldehyde 3-phosphate: step 2/5. In Tolumonas auensis (strain DSM 9187 / NBRC 110442 / TA 4), this protein is Phosphoglycerate kinase.